The sequence spans 468 residues: Glutamate--tRNA ligase 2 (468 aa).

The short motif at 13-23 is the 'HIGH' region element; sequence PSPTGYLHIGG. The short motif at 241–245 is the 'KMSKS' region element; sequence KLSKR. Residue K244 coordinates ATP.

Belongs to the class-I aminoacyl-tRNA synthetase family. Glutamate--tRNA ligase type 1 subfamily. Monomer.

The protein localises to the cytoplasm. It catalyses the reaction tRNA(Glu) + L-glutamate + ATP = L-glutamyl-tRNA(Glu) + AMP + diphosphate. In terms of biological role, catalyzes the attachment of glutamate to tRNA(Glu) in a two-step reaction: glutamate is first activated by ATP to form Glu-AMP and then transferred to the acceptor end of tRNA(Glu). In Paracoccus denitrificans (strain Pd 1222), this protein is Glutamate--tRNA ligase 2.